A 254-amino-acid polypeptide reads, in one-letter code: Gamma-glutamyl-gamma-aminobutyrate hydrolase (254 aa).

The Glutamine amidotransferase type-1 domain maps to 16–250 (RNRLKGHATQ…ITAWQHHIAE (235 aa)). Cysteine 114 serves as the catalytic Nucleophile. Active-site residues include histidine 222 and glutamate 224.

This sequence belongs to the peptidase C26 family.

The catalysed reaction is 4-(gamma-L-glutamylamino)butanoate + H2O = 4-aminobutanoate + L-glutamate. It participates in amine and polyamine degradation; putrescine degradation; 4-aminobutanoate from putrescine: step 4/4. In terms of biological role, involved in the breakdown of putrescine via hydrolysis of the gamma-glutamyl linkage of gamma-glutamyl-gamma-aminobutyrate. This is Gamma-glutamyl-gamma-aminobutyrate hydrolase (puuD) from Shigella flexneri.